The sequence spans 641 residues: Macrolide export ATP-binding/permease protein MacB (641 aa).

The 239-residue stretch at 2 to 240 folds into the ABC transporter domain; the sequence is IKLENIKKSF…LKQNLKEIKP (239 aa). 38–45 serves as a coordination point for ATP; sequence GQSGSGKS. Transmembrane regions (helical) follow at residues 268 to 288, 516 to 536, 565 to 585, and 601 to 621; these read FLTM…VALA, LLIS…VMNI, FLIE…GLAY, and IFST…GIVF.

This sequence belongs to the ABC transporter superfamily. Macrolide exporter (TC 3.A.1.122) family. As to quaternary structure, homodimer.

It is found in the cell inner membrane. Functionally, non-canonical ABC transporter that contains transmembrane domains (TMD), which form a pore in the inner membrane, and an ATP-binding domain (NBD), which is responsible for energy generation. Confers resistance against macrolides. This chain is Macrolide export ATP-binding/permease protein MacB, found in Campylobacter fetus subsp. fetus (strain 82-40).